A 61-amino-acid chain; its full sequence is Small ribosomal subunit protein uS14 (61 aa).

Positions 24, 27, 40, and 43 each coordinate Zn(2+).

This sequence belongs to the universal ribosomal protein uS14 family. Zinc-binding uS14 subfamily. Part of the 30S ribosomal subunit. Contacts proteins S3 and S10. Zn(2+) is required as a cofactor.

In terms of biological role, binds 16S rRNA, required for the assembly of 30S particles and may also be responsible for determining the conformation of the 16S rRNA at the A site. This chain is Small ribosomal subunit protein uS14, found in Caldicellulosiruptor bescii (strain ATCC BAA-1888 / DSM 6725 / KCTC 15123 / Z-1320) (Anaerocellum thermophilum).